The following is a 201-amino-acid chain: Sorting nexin-10 (201 aa).

Residues 8–125 (EEFVSVWVRD…SLHLFLQSHL (118 aa)) form a required for interaction with ATP6V1D region. Positions 10 to 127 (FVSVWVRDPR…HLFLQSHLNS (118 aa)) constitute a PX domain. 3 residues coordinate a 1,2-diacyl-sn-glycero-3-phospho-(1D-myo-inositol-3-phosphate): Arg-53, Lys-79, and Arg-94. Residues 156-201 (FPEEDEEGKKENDIDYDSESSSSGLGHSSDDSSSHGCKVNTAPQES) are disordered.

This sequence belongs to the sorting nexin family. As to quaternary structure, interacts with ATP6V1D; may play a role in ciliogenesis.

The protein localises to the cytoplasm. It is found in the endosome membrane. Its subcellular location is the cytoskeleton. The protein resides in the microtubule organizing center. It localises to the centrosome. Probable phosphoinositide-binding protein involved in protein sorting and membrane trafficking in endosomes. Plays a role in cilium biogenesis through regulation of the transport and the localization of proteins to the cilium. Required for the localization to the cilium of V-ATPase subunit ATP6V1D and ATP6V0D1, and RAB8A. Involved in osteoclast differentiation and therefore bone resorption. In Homo sapiens (Human), this protein is Sorting nexin-10 (SNX10).